The sequence spans 528 residues: Protein HPH2 (528 aa).

The segment covering 1 to 13 (MQNAQIKSSSKGS) has biased composition (low complexity). Disordered stretches follow at residues 1-52 (MQNA…STVE), 170-193 (AQQH…PSRS), 230-257 (ILPN…STQT), and 270-334 (ESSP…QSVA). A compositionally biased stretch (basic and acidic residues) spans 17–36 (GTDRNSKDGVEKRPLEDVKQ). Low complexity-rich tracts occupy residues 283 to 296 (PSVA…VANP) and 308 to 332 (SFSQ…FSQS). A helical membrane pass occupies residues 505-521 (ALDIVFLIIIIVICYTF).

As to quaternary structure, interacts with HPH1/FRT1. Post-translationally, phosphorylated by CDC28.

It is found in the endoplasmic reticulum membrane. Required for growth under high NaCl, alkaline pH and cell wall stress. The sequence is that of Protein HPH2 (FRT2) from Saccharomyces cerevisiae (strain ATCC 204508 / S288c) (Baker's yeast).